The sequence spans 373 residues: DNA replication and repair protein RecF (373 aa).

Residue 30 to 37 (GENAQGKT) coordinates ATP.

This sequence belongs to the RecF family.

Its subcellular location is the cytoplasm. Its function is as follows. The RecF protein is involved in DNA metabolism; it is required for DNA replication and normal SOS inducibility. RecF binds preferentially to single-stranded, linear DNA. It also seems to bind ATP. This is DNA replication and repair protein RecF from Bacillus cytotoxicus (strain DSM 22905 / CIP 110041 / 391-98 / NVH 391-98).